We begin with the raw amino-acid sequence, 682 residues long: Methionine--tRNA ligase (682 aa).

Residues Pro15–His25 carry the 'HIGH' region motif. Residues Cys146, Cys149, Cys159, and Cys162 each coordinate Zn(2+). Residues Lys331–Ser335 carry the 'KMSKS' region motif. Lys334 is an ATP binding site. In terms of domain architecture, tRNA-binding spans Asp580–Lys682.

Belongs to the class-I aminoacyl-tRNA synthetase family. MetG type 1 subfamily. In terms of assembly, homodimer. Requires Zn(2+) as cofactor.

Its subcellular location is the cytoplasm. The catalysed reaction is tRNA(Met) + L-methionine + ATP = L-methionyl-tRNA(Met) + AMP + diphosphate. Is required not only for elongation of protein synthesis but also for the initiation of all mRNA translation through initiator tRNA(fMet) aminoacylation. This chain is Methionine--tRNA ligase, found in Haemophilus influenzae (strain 86-028NP).